The chain runs to 234 residues: Large ribosomal subunit protein uL1 (234 aa).

Belongs to the universal ribosomal protein uL1 family. In terms of assembly, part of the 50S ribosomal subunit.

Functionally, binds directly to 23S rRNA. The L1 stalk is quite mobile in the ribosome, and is involved in E site tRNA release. Its function is as follows. Protein L1 is also a translational repressor protein, it controls the translation of the L11 operon by binding to its mRNA. The sequence is that of Large ribosomal subunit protein uL1 from Pseudoalteromonas translucida (strain TAC 125).